Here is a 130-residue protein sequence, read N- to C-terminus: Small ribosomal subunit protein uS11c (130 aa).

This sequence belongs to the universal ribosomal protein uS11 family. As to quaternary structure, part of the 30S ribosomal subunit.

The protein localises to the plastid. The protein resides in the chloroplast. This is Small ribosomal subunit protein uS11c from Adiantum capillus-veneris (Maidenhair fern).